Consider the following 129-residue polypeptide: Intraflagellar transport protein 20 homolog (129 aa).

Residues 89–121 (VLLQMTIRELTVEKERLRVELEAVRKIEKEQDE) adopt a coiled-coil conformation.

Component of the IFT complex B composed of at least che-2, che-13, dyf-1, dyf-3, dyf-6, dyf-11, dyf-13, ift-20, ift-74, ift-81, ifta-2, osm-1, osm-5 and osm-6.

The protein resides in the cell projection. It localises to the cilium. Functionally, component of the intraflagellar transport (IFT) complex B required for transport of proteins in the motile cilium. Required for ciliary entrance and transport of specific ciliary cargo proteins such as che-3 which are related to motility. The protein is Intraflagellar transport protein 20 homolog of Caenorhabditis elegans.